Here is a 563-residue protein sequence, read N- to C-terminus: Sperm-tail PG-rich repeat-containing protein 2 (563 aa).

3 STPGR repeats span residues 21–34 (VGPG…PKQQ), 63–73 (PGPAHYNVSQA), and 97–107 (GPGPASYDCPY). The interval 131 to 163 (IPSIPSSGKSHGYHLNEDDTIMRRTPPSSDKTM) is disordered. STPGR repeat units lie at residues 200–219 (GPGP…YENI), 250–263 (PGPG…QFDH), 292–321 (TPAP…FGQR), 334–353 (LPGP…QVKK), 423–438 (LPAP…YDMS), 473–483 (GPGPATYNPIL), and 507–518 (SPGPTTYELSPF).

The polypeptide is Sperm-tail PG-rich repeat-containing protein 2 (Stpg2) (Rattus norvegicus (Rat)).